Consider the following 91-residue polypeptide: Small ribosomal subunit protein uS19 (91 aa).

It belongs to the universal ribosomal protein uS19 family.

In terms of biological role, protein S19 forms a complex with S13 that binds strongly to the 16S ribosomal RNA. The chain is Small ribosomal subunit protein uS19 from Lactiplantibacillus plantarum (strain ATCC BAA-793 / NCIMB 8826 / WCFS1) (Lactobacillus plantarum).